The sequence spans 330 residues: Ketol-acid reductoisomerase (NADP(+)) (330 aa).

Positions 1 to 181 constitute a KARI N-terminal Rossmann domain; it reads MNVYYEQDAD…GGAKAGVIET (181 aa). Residues 24–27, Arg47, Ser50, Ser52, and 82–85 contribute to the NADP(+) site; these read YGSQ and DQYQ. His107 is a catalytic residue. Gly133 lines the NADP(+) pocket. The KARI C-terminal knotted domain occupies 182-327; that stretch reads TIKNETETDL…AKLRNMMSWL (146 aa). Mg(2+) contacts are provided by Asp190, Glu194, Glu226, and Glu230. Ser251 provides a ligand contact to substrate.

Belongs to the ketol-acid reductoisomerase family. Requires Mg(2+) as cofactor.

The enzyme catalyses (2R)-2,3-dihydroxy-3-methylbutanoate + NADP(+) = (2S)-2-acetolactate + NADPH + H(+). It catalyses the reaction (2R,3R)-2,3-dihydroxy-3-methylpentanoate + NADP(+) = (S)-2-ethyl-2-hydroxy-3-oxobutanoate + NADPH + H(+). It participates in amino-acid biosynthesis; L-isoleucine biosynthesis; L-isoleucine from 2-oxobutanoate: step 2/4. The protein operates within amino-acid biosynthesis; L-valine biosynthesis; L-valine from pyruvate: step 2/4. Its function is as follows. Involved in the biosynthesis of branched-chain amino acids (BCAA). Catalyzes an alkyl-migration followed by a ketol-acid reduction of (S)-2-acetolactate (S2AL) to yield (R)-2,3-dihydroxy-isovalerate. In the isomerase reaction, S2AL is rearranged via a Mg-dependent methyl migration to produce 3-hydroxy-3-methyl-2-ketobutyrate (HMKB). In the reductase reaction, this 2-ketoacid undergoes a metal-dependent reduction by NADPH to yield (R)-2,3-dihydroxy-isovalerate. This chain is Ketol-acid reductoisomerase (NADP(+)), found in Chlorobium phaeovibrioides (strain DSM 265 / 1930) (Prosthecochloris vibrioformis (strain DSM 265)).